Consider the following 242-residue polypeptide: Uridylate kinase (242 aa).

12 to 15 (KLSG) serves as a coordination point for ATP. Positions 20–25 (GQKGYG) are involved in allosteric activation by GTP. Gly-54 is a binding site for UMP. Residues Gly-55 and Arg-59 each coordinate ATP. Residues Asp-74 and 135-142 (TGNPYFST) each bind UMP. Residues Gln-163, Tyr-168, and Asp-171 each contribute to the ATP site.

Belongs to the UMP kinase family. Homohexamer.

The protein localises to the cytoplasm. The catalysed reaction is UMP + ATP = UDP + ADP. It functions in the pathway pyrimidine metabolism; CTP biosynthesis via de novo pathway; UDP from UMP (UMPK route): step 1/1. With respect to regulation, allosterically activated by GTP. Inhibited by UTP. Catalyzes the reversible phosphorylation of UMP to UDP. The sequence is that of Uridylate kinase from Desulforamulus reducens (strain ATCC BAA-1160 / DSM 100696 / MI-1) (Desulfotomaculum reducens).